Reading from the N-terminus, the 96-residue chain is Co-chaperonin GroES (96 aa).

The protein belongs to the GroES chaperonin family. As to quaternary structure, heptamer of 7 subunits arranged in a ring. Interacts with the chaperonin GroEL.

It is found in the cytoplasm. Functionally, together with the chaperonin GroEL, plays an essential role in assisting protein folding. The GroEL-GroES system forms a nano-cage that allows encapsulation of the non-native substrate proteins and provides a physical environment optimized to promote and accelerate protein folding. GroES binds to the apical surface of the GroEL ring, thereby capping the opening of the GroEL channel. This Histophilus somni (strain 129Pt) (Haemophilus somnus) protein is Co-chaperonin GroES.